A 125-amino-acid polypeptide reads, in one-letter code: MSVNPKAFPLADSGLTQQILDLVQQASHYKQLRKGANEATKTLNRGISEFIVMAADTEPIEILLHLPLLCEDKNVPYVFVPSKAALGRACGVSRPVISASITTNEASDLLPQIQAIKLAIEKLLI.

Belongs to the eukaryotic ribosomal protein eL8 family. In terms of assembly, component of the U3 snoRNP particle. Binds to the C'/D and B/C motifs in U3 snoRNA. Component of the 25S U4/U6.U5 tri-snRNP particle, a subcomplex of the spliceosome. Binds to the 5' stem-loop of U4 snRNA.

Its subcellular location is the nucleus. The protein resides in the nucleolus. Functionally, common component of the spliceosome and rRNA processing machinery. In association with the spliceosomal U4/U6.U5 tri-snRNP particle, required for splicing of pre-mRNA. In association with box C/D snoRNPs, required for processing of pre-ribosomal RNA (rRNA) and site-specific 2'-O-methylation of substrate RNAs. Essential for the accumulation and stability of U4 snRNA, U6 snRNA, and box C/D snoRNAs. This Schizosaccharomyces pombe (strain 972 / ATCC 24843) (Fission yeast) protein is 13 kDa ribonucleoprotein-associated protein (snu13).